A 184-amino-acid polypeptide reads, in one-letter code: Photosystem I assembly protein Ycf4 (184 aa).

2 consecutive transmembrane segments (helical) span residues 22–42 and 57–77; these read FCWA…GTSS and ILFF…LFIS.

It belongs to the Ycf4 family.

It is found in the plastid. It localises to the chloroplast thylakoid membrane. Functionally, seems to be required for the assembly of the photosystem I complex. The protein is Photosystem I assembly protein Ycf4 of Liriodendron tulipifera (Tuliptree).